Consider the following 623-residue polypeptide: Kelch-like protein diablo (623 aa).

Positions 1–54 are disordered; the sequence is MGDLPGSGSTAQPRDAAVTGTGGNSTAGGGSSVGSTAVDRPPSPARLSHTSEKH. T19 is subject to Phosphothreonine. The span at 20 to 32 shows a compositional bias: gly residues; the sequence is GTGGNSTAGGGSS. The region spanning 72–139 is the BTB domain; it reads CDVVLNVGGR…CYTAHIMVEE (68 aa). Residues 174–276 form the BACK domain; that stretch reads CLGIRAFADT…SPKFLVGTVG (103 aa). 6 Kelch repeats span residues 323–369, 371–417, 418–464, 466–511, 513–558, and 559–605; these read VLFA…VLND, LYAV…VLDG, FLYA…VLGG, LYAI…VFNN, IYAV…VVNG, and QLYA…VMRA.

It functions in the pathway protein modification; protein ubiquitination. In terms of biological role, probable substrate-specific adapter of an E3 ubiquitin-protein ligase complex which mediates the ubiquitination and subsequent proteasomal degradation of target proteins. May have a role in synapse differentiation and growth. The chain is Kelch-like protein diablo from Drosophila erecta (Fruit fly).